Consider the following 253-residue polypeptide: UDP-Glc:alpha-D-GlcNAc-diphosphoundecaprenol beta-1,3-glucosyltransferase WfgD (253 aa).

Belongs to the glycosyltransferase 2 family. It depends on Mn(2+) as a cofactor. Requires Mg(2+) as cofactor.

The protein localises to the cell inner membrane. It catalyses the reaction N-acetyl-alpha-D-glucosaminyl-di-trans,octa-cis-undecaprenyl diphosphate + UDP-alpha-D-glucose = beta-D-Glc-(1-&gt;3)-alpha-D-GlcNAc-di-trans,octa-cis-undecaprenyl diphosphate + UDP + H(+). The protein operates within bacterial outer membrane biogenesis; lipopolysaccharide biosynthesis. In terms of biological role, catalyzes the addition of Glc, the second sugar moiety of the O152-antigen repeating unit, to GlcNAc-pyrophosphate-undecaprenol. This chain is UDP-Glc:alpha-D-GlcNAc-diphosphoundecaprenol beta-1,3-glucosyltransferase WfgD (wfgD), found in Escherichia coli.